The primary structure comprises 230 residues: Cytochrome b6-f complex iron-sulfur subunit, chloroplastic (230 aa).

Residues M1–S16 are compositionally biased toward low complexity. The interval M1–N20 is disordered. The transit peptide at M1–P56 directs the protein to the chloroplast. A helical transmembrane segment spans residues L73 to V93. A Rieske domain is found at A116–V212. C158, H160, C176, and H179 together coordinate [2Fe-2S] cluster. C163 and C178 form a disulfide bridge.

It belongs to the Rieske iron-sulfur protein family. The 4 large subunits of the cytochrome b6-f complex are cytochrome b6, subunit IV (17 kDa polypeptide, petD), cytochrome f and the Rieske protein, while the 4 small subunits are petG, petL, petM and petN. The complex functions as a dimer. [2Fe-2S] cluster is required as a cofactor.

Its subcellular location is the plastid. The protein resides in the chloroplast thylakoid membrane. The enzyme catalyses 2 oxidized [plastocyanin] + a plastoquinol + 2 H(+)(in) = 2 reduced [plastocyanin] + a plastoquinone + 4 H(+)(out). Component of the cytochrome b6-f complex, which mediates electron transfer between photosystem II (PSII) and photosystem I (PSI), cyclic electron flow around PSI, and state transitions. This is Cytochrome b6-f complex iron-sulfur subunit, chloroplastic (petC) from Fritillaria agrestis (Stinkbells).